The chain runs to 716 residues: 1,4-alpha-glucan branching enzyme GlgB (716 aa).

Asp399 functions as the Nucleophile in the catalytic mechanism. The Proton donor role is filled by Glu452.

Belongs to the glycosyl hydrolase 13 family. GlgB subfamily. Monomer.

The catalysed reaction is Transfers a segment of a (1-&gt;4)-alpha-D-glucan chain to a primary hydroxy group in a similar glucan chain.. Its pathway is glycan biosynthesis; glycogen biosynthesis. In terms of biological role, catalyzes the formation of the alpha-1,6-glucosidic linkages in glycogen by scission of a 1,4-alpha-linked oligosaccharide from growing alpha-1,4-glucan chains and the subsequent attachment of the oligosaccharide to the alpha-1,6 position. In Rhodopseudomonas palustris (strain HaA2), this protein is 1,4-alpha-glucan branching enzyme GlgB.